The primary structure comprises 104 residues: MEFVTTETVPGREITESLGVARGNTVKARNVGRDITQSIRNITGGELKAYSELLTDARDDALDRMAEDARSMGADAVVNVRLESSEIANGGSEVIAYGTAVTLA.

This sequence belongs to the UPF0145 family.

The sequence is that of UPF0145 protein VNG_2432C from Halobacterium salinarum (strain ATCC 700922 / JCM 11081 / NRC-1) (Halobacterium halobium).